Consider the following 342-residue polypeptide: S-adenosylmethionine:tRNA ribosyltransferase-isomerase (342 aa).

This sequence belongs to the QueA family. In terms of assembly, monomer.

Its subcellular location is the cytoplasm. The enzyme catalyses 7-aminomethyl-7-carbaguanosine(34) in tRNA + S-adenosyl-L-methionine = epoxyqueuosine(34) in tRNA + adenine + L-methionine + 2 H(+). It participates in tRNA modification; tRNA-queuosine biosynthesis. Functionally, transfers and isomerizes the ribose moiety from AdoMet to the 7-aminomethyl group of 7-deazaguanine (preQ1-tRNA) to give epoxyqueuosine (oQ-tRNA). The polypeptide is S-adenosylmethionine:tRNA ribosyltransferase-isomerase (Streptococcus agalactiae serotype III (strain NEM316)).